A 244-amino-acid chain; its full sequence is Transcriptional regulatory protein YpdB (244 aa).

A Response regulatory domain is found at 2–116 (KVIIVEDEFL…RITGMLQKLE (115 aa)). At D53 the chain carries 4-aspartylphosphate. Positions 139-244 (INLVKDERII…VKEFRQLMHL (106 aa)) constitute an HTH LytTR-type domain.

In terms of processing, phosphorylated by YpdA.

Its subcellular location is the cytoplasm. Functionally, member of the two-component regulatory system YpdA/YpdB. YpdB regulates expression of yhjX by binding to its promoter region. The polypeptide is Transcriptional regulatory protein YpdB (ypdB) (Escherichia coli O157:H7).